The following is a 186-amino-acid chain: Large ribosomal subunit protein uL5 (186 aa).

Belongs to the universal ribosomal protein uL5 family. In terms of assembly, part of the 50S ribosomal subunit; part of the 5S rRNA/L5/L18/L25 subcomplex. Contacts the 5S rRNA and the P site tRNA. Forms a bridge to the 30S subunit in the 70S ribosome.

In terms of biological role, this is one of the proteins that bind and probably mediate the attachment of the 5S RNA into the large ribosomal subunit, where it forms part of the central protuberance. In the 70S ribosome it contacts protein S13 of the 30S subunit (bridge B1b), connecting the 2 subunits; this bridge is implicated in subunit movement. Contacts the P site tRNA; the 5S rRNA and some of its associated proteins might help stabilize positioning of ribosome-bound tRNAs. The polypeptide is Large ribosomal subunit protein uL5 (Mycoplasmopsis synoviae (strain 53) (Mycoplasma synoviae)).